A 643-amino-acid polypeptide reads, in one-letter code: Tigger transposable element-derived protein 5 (643 aa).

Residues 1 to 50 (MYSAGPPAVPAPRRCRRPPPGRPMQPPRPPAPAPVPAARPPPPAPGPRPR) form a disordered region. The span at 20–48 (PGRPMQPPRPPAPAPVPAARPPPPAPGPR) shows a compositional bias: pro residues. Positions 52–103 (AVKMAFRKAYSIKDKLQAIERVKGGERQASVCRDFGVPGGTLRGWLKDEPKL) constitute an HTH psq-type domain. 2 DNA-binding regions (H-T-H motif) span residues 79–99 (QASVCRDFGVPGGTLRGWLKD) and 150–183 (PLIQAQAEAFARQIYGPECTFKASHGWFWRWQKR). Residues 117–190 (QRKKMRLANE…QKRHGISSQR (74 aa)) form the HTH CENPB-type domain. The segment at 197–236 (PVAAGPAPGPPVKQEPAQPTRAGPLPDRAASTPAPAEGGY) is disordered. In terms of domain architecture, DDE-1 spans 238–358 (DEQIYNANVT…LQQKAVLLVA (121 aa)). The segment at 366-395 (EARMPALEESEETRRRCRPEPTGPPEELQT) is disordered.

Belongs to the tigger transposable element derived protein family.

It is found in the nucleus. The polypeptide is Tigger transposable element-derived protein 5 (TIGD5) (Bos taurus (Bovine)).